Reading from the N-terminus, the 700-residue chain is Cap-specific mRNA (nucleoside-2'-O-)-methyltransferase 2 (700 aa).

Residues 1-21 (MSFRSSPQGKPHPMTDYQSIR) form a disordered region. The 213-residue stretch at 109–321 (EFVTVAWCKL…VYVICLNYNK (213 aa)) folds into the Adrift-type SAM-dependent 2'-O-MTase domain. The active site involves K117. 3 residues coordinate S-adenosyl-L-methionine: G143, W164, and D234. Residue D234 is part of the active site. K274 serves as the catalytic Proton acceptor.

The protein localises to the nucleus. It catalyses the reaction a 5'-end (N(7)-methyl 5'-triphosphoguanosine)-(2'-O-methyl-ribonucleoside)-(ribonucleotide) in mRNA + S-adenosyl-L-methionine = a 5'-end (N(7)-methyl 5'-triphosphoguanosine)-(2'-O-methyl-ribonucleoside)-(2'-O-methyl-ribonucleotide) in mRNA + S-adenosyl-L-homocysteine + H(+). Probable S-adenosyl-L-methionine-dependent methyltransferase that mediates mRNA cap2 2'-O-ribose methylation to the 5'-cap structure of mRNAs. May methylate the ribose of the second nucleotide of a m(7)GpppG-capped mRNA (cap0) to produce m(7)GpppRmpNm (cap2). Regulates expression of tracheal genes required for pathfinding on the segmental nerve. The protein is Cap-specific mRNA (nucleoside-2'-O-)-methyltransferase 2 (cmtr2) of Drosophila melanogaster (Fruit fly).